The chain runs to 314 residues: 4-hydroxy-3-methylbut-2-enyl diphosphate reductase (314 aa).

Cys-12 lines the [4Fe-4S] cluster pocket. His-43 and His-81 together coordinate (2E)-4-hydroxy-3-methylbut-2-enyl diphosphate. Residues His-43 and His-81 each coordinate dimethylallyl diphosphate. The isopentenyl diphosphate site is built by His-43 and His-81. Cys-103 is a [4Fe-4S] cluster binding site. (2E)-4-hydroxy-3-methylbut-2-enyl diphosphate is bound at residue His-131. His-131 contributes to the dimethylallyl diphosphate binding site. His-131 is a binding site for isopentenyl diphosphate. Catalysis depends on Glu-133, which acts as the Proton donor. Thr-170 provides a ligand contact to (2E)-4-hydroxy-3-methylbut-2-enyl diphosphate. Cys-198 serves as a coordination point for [4Fe-4S] cluster. (2E)-4-hydroxy-3-methylbut-2-enyl diphosphate is bound by residues Ser-226, Asn-228, and Ser-271. Residues Ser-226, Asn-228, and Ser-271 each contribute to the dimethylallyl diphosphate site. Residues Ser-226, Asn-228, and Ser-271 each coordinate isopentenyl diphosphate.

It belongs to the IspH family. [4Fe-4S] cluster serves as cofactor.

It catalyses the reaction isopentenyl diphosphate + 2 oxidized [2Fe-2S]-[ferredoxin] + H2O = (2E)-4-hydroxy-3-methylbut-2-enyl diphosphate + 2 reduced [2Fe-2S]-[ferredoxin] + 2 H(+). It carries out the reaction dimethylallyl diphosphate + 2 oxidized [2Fe-2S]-[ferredoxin] + H2O = (2E)-4-hydroxy-3-methylbut-2-enyl diphosphate + 2 reduced [2Fe-2S]-[ferredoxin] + 2 H(+). It functions in the pathway isoprenoid biosynthesis; dimethylallyl diphosphate biosynthesis; dimethylallyl diphosphate from (2E)-4-hydroxy-3-methylbutenyl diphosphate: step 1/1. Its pathway is isoprenoid biosynthesis; isopentenyl diphosphate biosynthesis via DXP pathway; isopentenyl diphosphate from 1-deoxy-D-xylulose 5-phosphate: step 6/6. Its function is as follows. Catalyzes the conversion of 1-hydroxy-2-methyl-2-(E)-butenyl 4-diphosphate (HMBPP) into a mixture of isopentenyl diphosphate (IPP) and dimethylallyl diphosphate (DMAPP). Acts in the terminal step of the DOXP/MEP pathway for isoprenoid precursor biosynthesis. The chain is 4-hydroxy-3-methylbut-2-enyl diphosphate reductase from Bacillus velezensis (strain DSM 23117 / BGSC 10A6 / LMG 26770 / FZB42) (Bacillus amyloliquefaciens subsp. plantarum).